The chain runs to 158 residues: uncharacterized protein (158 aa).

3 helical membrane-spanning segments follow: residues 45–65, 76–96, and 106–126; these read GIFFQVVGAILVFGAYLPAVI, LAIGMWIISIAGLGLLAIFAW, and FILVALSETLSCIASIIVFAL.

This sequence to U.parvum UU007, UU041 and UU042.

The protein localises to the cell membrane. This is an uncharacterized protein from Ureaplasma parvum serovar 3 (strain ATCC 700970).